A 182-amino-acid polypeptide reads, in one-letter code: Probable nicotinate-nucleotide adenylyltransferase (182 aa).

Belongs to the NadD family.

The enzyme catalyses nicotinate beta-D-ribonucleotide + ATP + H(+) = deamido-NAD(+) + diphosphate. It participates in cofactor biosynthesis; NAD(+) biosynthesis; deamido-NAD(+) from nicotinate D-ribonucleotide: step 1/1. Functionally, catalyzes the reversible adenylation of nicotinate mononucleotide (NaMN) to nicotinic acid adenine dinucleotide (NaAD). This is Probable nicotinate-nucleotide adenylyltransferase from Sulfurimonas denitrificans (strain ATCC 33889 / DSM 1251) (Thiomicrospira denitrificans (strain ATCC 33889 / DSM 1251)).